The following is a 655-amino-acid chain: Phosphatidylinositol-3,5-bisphosphate 3-phosphatase MTMR6 (655 aa).

The GRAM domain occupies 1–101; sequence MEHIRTTKVE…YNSLLQLSKQ (101 aa). An interaction with RAB1B region spans residues 2 to 141; that stretch reads EHIRTTKVEQ…AEYERMGVPN (140 aa). Y108 carries the post-translational modification Phosphotyrosine. The Myotubularin phosphatase domain maps to 124 to 537; that stretch reads GWQLIDLAAE…FNFKFWRNMY (414 aa). Positions 286, 311, and 312 each coordinate a 1,2-diacyl-sn-glycero-3-phospho-(1D-myo-inositol-3,5-bisphosphate). A 1,2-diacyl-sn-glycero-3-phospho-(1D-myo-inositol-3-phosphate)-binding residues include N286, N311, and I312. The active-site Phosphocysteine intermediate is C374. A 1,2-diacyl-sn-glycero-3-phospho-(1D-myo-inositol-3,5-bisphosphate)-binding residues include S375, D376, G377, W378, D379, R380, K416, and R420. A 1,2-diacyl-sn-glycero-3-phospho-(1D-myo-inositol-3-phosphate) is bound by residues S375, D376, G377, W378, D379, and R380. R420 contributes to the a 1,2-diacyl-sn-glycero-3-phospho-(1D-myo-inositol-3-phosphate) binding site. Residues 547–581 adopt a coiled-coil conformation; sequence RQSVLNIIMNMNEQNKQLEEDVKDLEAKIKQCKSG. A phosphoserine mark is found at S595, S623, and S645.

It belongs to the protein-tyrosine phosphatase family. Non-receptor class myotubularin subfamily. Homodimer. Heterodimer (via C-terminus) with MTMR9 (via C-terminus). Interacts with ALKBH4. Interacts with KCNN4. Interacts (via GRAM domain) with RAB1B (in GDP-bound form); the interaction regulates MTMR6 recruitment to the endoplasmic reticulum-Golgi intermediate compartment.

The protein resides in the cytoplasm. It localises to the endoplasmic reticulum. Its subcellular location is the cell projection. It is found in the ruffle membrane. The protein localises to the endoplasmic reticulum-Golgi intermediate compartment. The protein resides in the perinuclear region. The enzyme catalyses a 1,2-diacyl-sn-glycero-3-phospho-(1D-myo-inositol-3,5-bisphosphate) + H2O = a 1,2-diacyl-sn-glycero-3-phospho-(1D-myo-inositol-5-phosphate) + phosphate. It catalyses the reaction a 1,2-diacyl-sn-glycero-3-phospho-(1D-myo-inositol-3-phosphate) + H2O = a 1,2-diacyl-sn-glycero-3-phospho-(1D-myo-inositol) + phosphate. It carries out the reaction 1,2-dioctanoyl-sn-glycero-3-phospho-(1D-myo-inositol-3,5-bisphosphate) + H2O = 1,2-dioctanoyl-sn-glycero-3-phospho-(1D-myo-inositol-5-phosphate) + phosphate. The catalysed reaction is 1,2-dioctanoyl-sn-glycero-3-phospho-(1-D-myo-inositol-3-phosphate) + H2O = 1,2-dioctanoyl-sn-glycero-3-phospho-(1D-myo-inositol) + phosphate. Its activity is regulated as follows. Allosterically activated by phosphatidylserine and/or phosphatidylinositol 4-phosphate (PtdIns(4)P), and phosphatidylinositol 5-phosphate (PtdIns(5)P). Interaction with MTMR9 increases catalytic activity towards phosphatidylinositol 3,5-bisphosphate. Functionally, lipid phosphatase that specifically dephosphorylates the D-3 position of phosphatidylinositol 3-phosphate and phosphatidylinositol 3,5-bisphosphate, generating phosphatidylinositol and phosphatidylinositol 5-phosphate. Binds with high affinity to phosphatidylinositol 3,5-bisphosphate (PtdIns(3,5)P2) but also to phosphatidylinositol 3-phosphate (PtdIns(3)P), phosphatidylinositol 4-phosphate (PtdIns(4)P), and phosphatidylinositol 5-phosphate (PtdIns(5)P), phosphatidic acid and phosphatidylserine. Negatively regulates ER-Golgi protein transport. Probably in association with MTMR9, plays a role in the late stages of macropinocytosis by dephosphorylating phosphatidylinositol 3-phosphate in membrane ruffles. Acts as a negative regulator of KCNN4/KCa3.1 channel activity in CD4(+) T-cells possibly by decreasing intracellular levels of phosphatidylinositol 3-phosphate. Negatively regulates proliferation of reactivated CD4(+) T-cells. In complex with MTMR9, negatively regulates DNA damage-induced apoptosis. The formation of the MTMR6-MTMR9 complex stabilizes both MTMR6 and MTMR9 protein levels. This Rattus norvegicus (Rat) protein is Phosphatidylinositol-3,5-bisphosphate 3-phosphatase MTMR6.